The following is a 273-amino-acid chain: Type III pantothenate kinase (273 aa).

5–12 is a binding site for ATP; sequence DVGNSHVV. 112–115 is a substrate binding site; sequence GTDL. The active-site Proton acceptor is the D114. D134 is a binding site for K(+). Residue T137 coordinates ATP. T189 serves as a coordination point for substrate.

It belongs to the type III pantothenate kinase family. As to quaternary structure, homodimer. It depends on NH4(+) as a cofactor. Requires K(+) as cofactor.

The protein localises to the cytoplasm. It carries out the reaction (R)-pantothenate + ATP = (R)-4'-phosphopantothenate + ADP + H(+). The protein operates within cofactor biosynthesis; coenzyme A biosynthesis; CoA from (R)-pantothenate: step 1/5. Its function is as follows. Catalyzes the phosphorylation of pantothenate (Pan), the first step in CoA biosynthesis. In Treponema pallidum subsp. pallidum (strain SS14), this protein is Type III pantothenate kinase.